The sequence spans 157 residues: Phosphopantetheine adenylyltransferase (157 aa).

Ser-8 provides a ligand contact to substrate. Residues 8–9 (SF) and His-16 each bind ATP. Residues Lys-40, Thr-72, and Arg-86 each coordinate substrate. Residues 87 to 89 (GLR), Glu-97, and 122 to 128 (YSFLSSS) each bind ATP.

The protein belongs to the bacterial CoaD family. As to quaternary structure, homohexamer. Mg(2+) serves as cofactor.

It localises to the cytoplasm. The catalysed reaction is (R)-4'-phosphopantetheine + ATP + H(+) = 3'-dephospho-CoA + diphosphate. It functions in the pathway cofactor biosynthesis; coenzyme A biosynthesis; CoA from (R)-pantothenate: step 4/5. Its function is as follows. Reversibly transfers an adenylyl group from ATP to 4'-phosphopantetheine, yielding dephospho-CoA (dPCoA) and pyrophosphate. The chain is Phosphopantetheine adenylyltransferase from Gloeothece citriformis (strain PCC 7424) (Cyanothece sp. (strain PCC 7424)).